The following is a 221-amino-acid chain: Casparian strip membrane protein 2 (221 aa).

The interval 1–21 (MEKSEATTIEIGETSRESKGK) is disordered. Residues 1–41 (MEKSEATTIEIGETSRESKGKTPLLAEVEQTARTAGSYRRG) are Cytoplasmic-facing. A helical membrane pass occupies residues 42-62 (VAIFDLILRVSAATSALAATI). Residues 63–89 (TMGTTEQTLPFFTQFFQFQASYDDLPA) lie on the Extracellular side of the membrane. A helical membrane pass occupies residues 90-110 (FTFFVIALSIVTGYLVLSVPF). Topologically, residues 111–131 (SVVCIAQPLAAVPRLLLIVCD) are cytoplasmic. Residues 132–152 (TLTVTLATAAASSSAAIVYLA) form a helical membrane-spanning segment. Residues 153–221 (HNGNADANWL…HYWDRRWCEI (69 aa)) lie on the Extracellular side of the membrane.

Belongs to the Casparian strip membrane proteins (CASP) family. In terms of assembly, homodimer and heterodimers.

The protein localises to the cell membrane. Regulates membrane-cell wall junctions and localized cell wall deposition. Required for establishment of the Casparian strip membrane domain (CSD) and the subsequent formation of Casparian strips, a cell wall modification of the root endodermis that determines an apoplastic barrier between the intraorganismal apoplasm and the extraorganismal apoplasm and prevents lateral diffusion. This chain is Casparian strip membrane protein 2, found in Erythranthe guttata (Yellow monkey flower).